A 508-amino-acid chain; its full sequence is Lysine--tRNA ligase (508 aa).

2 residues coordinate Mg(2+): Glu418 and Glu425.

Belongs to the class-II aminoacyl-tRNA synthetase family. Homodimer. Mg(2+) is required as a cofactor.

The protein resides in the cytoplasm. It carries out the reaction tRNA(Lys) + L-lysine + ATP = L-lysyl-tRNA(Lys) + AMP + diphosphate. In Burkholderia pseudomallei (strain K96243), this protein is Lysine--tRNA ligase.